A 1137-amino-acid chain; its full sequence is 2'-5'-oligoadenylate synthase 3 (1137 aa).

Met-1 carries the N-acetylmethionine modification. The segment at 6–341 (TPAGALDKLV…GALVQPWEGP (336 aa)) is OAS domain 1. 2 interaction with dsRNA regions span residues 12–56 (DKLV…VIRI) and 185–199 (ELRK…VKLK). A linker region spans residues 342-461 (GLPCAGILDL…GSQMGPDLSQ (120 aa)). Polar residues predominate over residues 434 to 453 (QSTASSNTPPGHSSMSTAGS). A disordered region spans residues 434-462 (QSTASSNTPPGHSSMSTAGSQMGPDLSQI). OAS domain stretches follow at residues 462–792 (IPSK…PWDV) and 800–1134 (TPAQ…WPVK). Ser-854 lines the ATP pocket. The Mg(2+) site is built by Asp-866, Asp-868, and Asp-938. Residues Arg-997, Lys-1000, and Gln-1019 each contribute to the ATP site.

It belongs to the 2-5A synthase family. As to quaternary structure, monomer. Requires Mg(2+) as cofactor.

The protein resides in the cytoplasm. It localises to the nucleus. The enzyme catalyses 3 ATP = 5'-triphosphoadenylyl-(2'-&gt;5')-adenylyl-(2'-&gt;5')-adenosine + 2 diphosphate. Produced as a latent enzyme which is activated by dsRNA generated during the course of viral infection. Strongly activated by long dsRNAs at least 50 nucleotides in length. ssRNA does not activate the enzyme. In terms of biological role, interferon-induced, dsRNA-activated antiviral enzyme which plays a critical role in cellular innate antiviral response. In addition, it may also play a role in other cellular processes such as apoptosis, cell growth, differentiation and gene regulation. Synthesizes preferentially dimers of 2'-5'-oligoadenylates (2-5A) from ATP which then bind to the inactive monomeric form of ribonuclease L (RNase L) leading to its dimerization and subsequent activation. Activation of RNase L leads to degradation of cellular as well as viral RNA, resulting in the inhibition of protein synthesis, thus terminating viral replication. Can mediate the antiviral effect via the classical RNase L-dependent pathway or an alternative antiviral pathway independent of RNase L. This is 2'-5'-oligoadenylate synthase 3 (Oas3) from Rattus norvegicus (Rat).